Reading from the N-terminus, the 232-residue chain is MKTLVICSGGLDSVSLAHKMAAEHELTGLLSFDYGQRHKKELDFAQACAKRLGVPHQIIDIRTIGASLTGSALTDDVDVPDGHYAEETMKVTVVPNRNAIMLAIAFGVAAAQKADAVALAVHGGDHFIYPDCRPGFIEAFQTMQKHALDGYADVKLLAPYVHATKADIVADGAKYRTPFEATWSCYKGADRHCGRCGTCVERREAFHLAGIDDPTSYEDADFWRATTQKRNA.

Position 7–17 (7–17 (CSGGLDSVSLA)) interacts with ATP. Zn(2+) contacts are provided by cysteine 185, cysteine 193, cysteine 196, and cysteine 199.

Belongs to the QueC family. Zn(2+) serves as cofactor.

The catalysed reaction is 7-carboxy-7-deazaguanine + NH4(+) + ATP = 7-cyano-7-deazaguanine + ADP + phosphate + H2O + H(+). It participates in purine metabolism; 7-cyano-7-deazaguanine biosynthesis. Catalyzes the ATP-dependent conversion of 7-carboxy-7-deazaguanine (CDG) to 7-cyano-7-deazaguanine (preQ(0)). In Brucella abortus (strain S19), this protein is 7-cyano-7-deazaguanine synthase.